Reading from the N-terminus, the 238-residue chain is Peroxisomal coenzyme A diphosphatase NUDT7 (238 aa).

At K20 the chain carries N6-succinyllysine. The Nudix hydrolase domain maps to 37-172 (YNKYSVLLPL…VTRLGHRFIN (136 aa)). The Nudix box signature appears at 77–98 (KRDPTDMDDAATALREAQEEVG). Positions 92 and 96 each coordinate Mg(2+). Residues 236–238 (SRL) carry the Microbody targeting signal motif.

This sequence belongs to the Nudix hydrolase family. PCD1 subfamily. As to quaternary structure, monomer. Mn(2+) serves as cofactor. Requires Mg(2+) as cofactor. Expressed in liver, kidney, pancreas, pituitary, small intestine, spleen, heart and placenta. Weakly expressed in brain.

It is found in the peroxisome. It catalyses the reaction hexanoyl-CoA + H2O = hexanoyl-4'-phosphopantetheine + adenosine 3',5'-bisphosphate + 2 H(+). It carries out the reaction octanoyl-CoA + H2O = S-octanoyl-4'-phosphopantetheine + adenosine 3',5'-bisphosphate + 2 H(+). The catalysed reaction is butanoyl-CoA + H2O = S-butanoyl-4'-phosphopantetheine + adenosine 3',5'-bisphosphate + 2 H(+). The enzyme catalyses decanoyl-CoA + H2O = decanoyl-4'-phosphopantetheine + adenosine 3',5'-bisphosphate + 2 H(+). It catalyses the reaction dodecanoyl-CoA + H2O = S-dodecanoyl-4'-phosphopantetheine + adenosine 3',5'-bisphosphate + 2 H(+). It carries out the reaction tetradecanoyl-CoA + H2O = tetradecanoyl-4'-phosphopantetheine + adenosine 3',5'-bisphosphate + 2 H(+). The catalysed reaction is choloyl-CoA + H2O = S-choloyl-4'-phosphopantetheine + adenosine 3',5'-bisphosphate + 2 H(+). The enzyme catalyses 3alpha,7alpha,12alpha-trihydroxy-5beta-cholestan-26-oyl-CoA + H2O = 3alpha,7alpha,12alpha-trihydroxy-5beta-cholestan-26-oyl-4'-phosphopantetheine + adenosine 3',5'-bisphosphate + 2 H(+). It catalyses the reaction acetyl-CoA + H2O = S-acetyl-4'-phosphopantetheine + adenosine 3',5'-bisphosphate + 2 H(+). It carries out the reaction CoA + H2O = (R)-4'-phosphopantetheine + adenosine 3',5'-bisphosphate + 2 H(+). The catalysed reaction is propanoyl-CoA + H2O = propanoyl-4'-phosphopantetheine + adenosine 3',5'-bisphosphate + 2 H(+). The enzyme catalyses malonyl-CoA + H2O = malonyl-4'-phosphopantetheine + adenosine 3',5'-bisphosphate + 2 H(+). It catalyses the reaction succinyl-CoA + H2O = succinyl-4'-phosphopantetheine + adenosine 3',5'-bisphosphate + 2 H(+). It carries out the reaction a 5'-end CoA-ribonucleoside in mRNA + H2O = a 5'-end phospho-adenosine-phospho-ribonucleoside in mRNA + (R)-4'-phosphopantetheine + 2 H(+). Its activity is regulated as follows. Inhibited by fluoride. Functionally, fatty acyl-coenzyme A (CoA) diphosphatase that hydrolyzes fatty acyl-CoA to yield acyl-4'-phosphopantetheine and adenosine 3',5'-bisphosphate. Cleaves CoA, CoA esters and oxidized CoA with similar efficiencies. Preferentially hydrolyzes medium-chain acyl-CoAs and bile acid-CoAs. Has no activity toward NDP-sugars, CDP-alcohols, (deoxy)nucleoside 5'-triphosphates, nucleoside 5'-di or monophosphates, diadenosine polyphosphates, NAD, NADH, NADP, NADPH or thymidine-5'-monophospho-p-nitrophenyl ester. May be required to eliminate oxidized CoA from peroxisomes, or regulate CoA and acyl-CoA levels in this organelle in response to metabolic demand. Does not play a role in U8 snoRNA decapping activity. Binds U8 snoRNA. Exhibits decapping activity towards dpCoA-capped RNAs in vitro. This is Peroxisomal coenzyme A diphosphatase NUDT7 from Homo sapiens (Human).